The sequence spans 327 residues: tRNA uridine(34) hydroxylase (327 aa).

A Rhodanese domain is found at 142–240; that stretch reads DDPDTLVIDT…YLEQVPEAES (99 aa). Cys-200 serves as the catalytic Cysteine persulfide intermediate.

It belongs to the TrhO family.

It carries out the reaction uridine(34) in tRNA + AH2 + O2 = 5-hydroxyuridine(34) in tRNA + A + H2O. In terms of biological role, catalyzes oxygen-dependent 5-hydroxyuridine (ho5U) modification at position 34 in tRNAs. The chain is tRNA uridine(34) hydroxylase from Synechococcus sp. (strain CC9605).